A 172-amino-acid chain; its full sequence is Translation initiation factor IF-3 (172 aa).

Belongs to the IF-3 family. In terms of assembly, monomer.

The protein localises to the cytoplasm. Functionally, IF-3 binds to the 30S ribosomal subunit and shifts the equilibrium between 70S ribosomes and their 50S and 30S subunits in favor of the free subunits, thus enhancing the availability of 30S subunits on which protein synthesis initiation begins. The chain is Translation initiation factor IF-3 from Campylobacter jejuni subsp. doylei (strain ATCC BAA-1458 / RM4099 / 269.97).